Reading from the N-terminus, the 326-residue chain is Transcription factor bHLH143 (326 aa).

Residues 175 to 189 (SDDDDNDDWESDDEV) show a composition bias toward acidic residues. 2 disordered regions span residues 175-194 (SDDDDNDDWESDDEVMSTGH) and 234-275 (RDSS…EQSR). The segment covering 255–271 (PESNISSKQETGSGLSD) has biased composition (polar residues). The 50-residue stretch at 263–312 (QETGSGLSDEQSRKDKIHTALRILESVVPGAKGKEALLLLDEAIDYLKLL) folds into the bHLH domain.

In terms of assembly, homodimer.

Its subcellular location is the nucleus. The protein is Transcription factor bHLH143 (BHLH143) of Arabidopsis thaliana (Mouse-ear cress).